Reading from the N-terminus, the 315-residue chain is Olfactory receptor 5M10 (315 aa).

Topologically, residues 1-25 (MLSPNHTIVTEFILLGLTDDPVLEK) are extracellular. The N-linked (GlcNAc...) asparagine glycan is linked to asparagine 5. A helical transmembrane segment spans residues 26 to 46 (ILFGVFLAIYLITLAGNLCMI). Topologically, residues 47–54 (LLIRTNSQ) are cytoplasmic. The helical transmembrane segment at 55–75 (LQTPMYFFLGHLSFVDICYSS) threads the bilayer. Residues 76-99 (NVTPNMLHNFLSEQKTISYAGCFT) are Extracellular-facing. The cysteines at positions 97 and 189 are disulfide-linked. A helical membrane pass occupies residues 100–120 (QCLLFIALVITEFYFLASMAL). Residues 121 to 139 (DRYVAICSPLHYSSRMSKN) lie on the Cytoplasmic side of the membrane. Residues 140–160 (ICISLVTVPYMYGFLNGLSQT) traverse the membrane as a helical segment. At 161–196 (LLTFHLSFCGSLEINHFYCADPPLIMLACSDTRVKK) the chain is on the extracellular side. A helical membrane pass occupies residues 197–217 (MAMFVVAGFTLSSSLFIILLS). Over 218 to 237 (YLFIFAAIFRIRSAEGRHKA) the chain is Cytoplasmic. The helical transmembrane segment at 238–258 (FSTCASHLTIVTLFYGTLFCM) threads the bilayer. Topologically, residues 259 to 271 (YVRPPSEKSVEES) are extracellular. Residues 272-292 (KIIAVFYTFLSPMLNPLIYSL) traverse the membrane as a helical segment. The Cytoplasmic segment spans residues 293–315 (RNRDVILAIQQMIRGKSFCKIAV).

It belongs to the G-protein coupled receptor 1 family.

Its subcellular location is the cell membrane. Its function is as follows. Odorant receptor. The chain is Olfactory receptor 5M10 (OR5M10) from Homo sapiens (Human).